The following is a 94-amino-acid chain: Protein RnfH (94 aa).

It belongs to the UPF0125 (RnfH) family.

In Serratia proteamaculans (strain 568), this protein is Protein RnfH.